A 247-amino-acid chain; its full sequence is Type III pantothenate kinase (247 aa).

Residue 7 to 14 (AIGNSRWH) coordinates ATP. Residues Tyr-91 and 95 to 98 (GLDR) contribute to the substrate site. The active-site Proton acceptor is Asp-97. Asp-117 contributes to the K(+) binding site. Position 120 (Thr-120) interacts with ATP.

It belongs to the type III pantothenate kinase family. As to quaternary structure, homodimer. Requires NH4(+) as cofactor. K(+) is required as a cofactor.

The protein localises to the cytoplasm. The enzyme catalyses (R)-pantothenate + ATP = (R)-4'-phosphopantothenate + ADP + H(+). The protein operates within cofactor biosynthesis; coenzyme A biosynthesis; CoA from (R)-pantothenate: step 1/5. Functionally, catalyzes the phosphorylation of pantothenate (Pan), the first step in CoA biosynthesis. The protein is Type III pantothenate kinase of Synechococcus sp. (strain ATCC 27144 / PCC 6301 / SAUG 1402/1) (Anacystis nidulans).